The following is a 325-amino-acid chain: Tetraacyldisaccharide 4'-kinase (325 aa).

Residue 55–62 (TAGGNGKT) coordinates ATP.

Belongs to the LpxK family.

The enzyme catalyses a lipid A disaccharide + ATP = a lipid IVA + ADP + H(+). Its pathway is glycolipid biosynthesis; lipid IV(A) biosynthesis; lipid IV(A) from (3R)-3-hydroxytetradecanoyl-[acyl-carrier-protein] and UDP-N-acetyl-alpha-D-glucosamine: step 6/6. In terms of biological role, transfers the gamma-phosphate of ATP to the 4'-position of a tetraacyldisaccharide 1-phosphate intermediate (termed DS-1-P) to form tetraacyldisaccharide 1,4'-bis-phosphate (lipid IVA). This Salmonella paratyphi A (strain ATCC 9150 / SARB42) protein is Tetraacyldisaccharide 4'-kinase.